The sequence spans 270 residues: Carboxy-S-adenosyl-L-methionine synthase (270 aa).

Residues tyrosine 65, 90 to 92, 143 to 144, asparagine 158, and arginine 225 contribute to the S-adenosyl-L-methionine site; these read GCS and DI.

This sequence belongs to the class I-like SAM-binding methyltransferase superfamily. Cx-SAM synthase family. In terms of assembly, homodimer.

It catalyses the reaction prephenate + S-adenosyl-L-methionine = carboxy-S-adenosyl-L-methionine + 3-phenylpyruvate + H2O. Functionally, catalyzes the conversion of S-adenosyl-L-methionine (SAM) to carboxy-S-adenosyl-L-methionine (Cx-SAM). The protein is Carboxy-S-adenosyl-L-methionine synthase of Chromohalobacter salexigens (strain ATCC BAA-138 / DSM 3043 / CIP 106854 / NCIMB 13768 / 1H11).